The chain runs to 629 residues: tRNA uridine 5-carboxymethylaminomethyl modification enzyme MnmG (629 aa).

FAD-binding positions include 13-18, V125, and S180; that span reads GGGHAG. 273 to 287 lines the NAD(+) pocket; the sequence is GPRYCPSIEDKVMRF. Q370 contributes to the FAD binding site.

This sequence belongs to the MnmG family. In terms of assembly, homodimer. Heterotetramer of two MnmE and two MnmG subunits. FAD is required as a cofactor.

Its subcellular location is the cytoplasm. In terms of biological role, NAD-binding protein involved in the addition of a carboxymethylaminomethyl (cmnm) group at the wobble position (U34) of certain tRNAs, forming tRNA-cmnm(5)s(2)U34. The polypeptide is tRNA uridine 5-carboxymethylaminomethyl modification enzyme MnmG (Klebsiella pneumoniae subsp. pneumoniae (strain ATCC 700721 / MGH 78578)).